Reading from the N-terminus, the 82-residue chain is Translational regulator CsrA (82 aa).

The protein belongs to the CsrA/RsmA family. In terms of assembly, homodimer; the beta-strands of each monomer intercalate to form a hydrophobic core while the alpha-helices form wings that extend away from the core. Each of the alpha-helical wings interacts with an FliW monomer, yielding a FliW-CsrA(2)-FliW complex.

The protein localises to the cytoplasm. In terms of biological role, a translational regulator that binds mRNA to regulate translation initiation and/or mRNA stability. Usually binds in the 5'-UTR at or near the Shine-Dalgarno sequence preventing ribosome-binding, thus repressing translation. Its main target seems to be the major flagellin gene, while its function is anatagonized by FliW. The polypeptide is Translational regulator CsrA (Geobacillus thermodenitrificans (strain NG80-2)).